The chain runs to 773 residues: MESNKSSSHGDVSTSPSFLNNHHQFNNGGDIIPKKKKNRIMHVGSYEVGKTLGNGTFGKVKLGTNICTKENVAIKFIKNNKLSGKQKETCFREIDIMKLLDHPNIVKLLDVVDKREEEGTTYLIVEYVSGGELFDYIVAREYIKEKEARKFFRQMISAIEYCHANLIVHRDLKPENLLLDSNGDIKISDFGLSNNIQPGKLLESFCGSPLYAAPEILKAEKYLGPPVDIWSLGVIMYAVLCGNLPWEGDSQAEISFNSVHGNYEDPTHLSAEAVHILRRMIVPNPKDRATIQELKNHPWTNIDYQEIPKSHLPPRDAVHEIKEDIFAHLISLGFPNTKETRDIILKNENCGIVNVYHLLLDRYASKEVENLKSKLELLSKRKKSFSDKRNPSTNSLASIPEDSNDLSSNNNNNQQQQNSPPSKTNSSSTSSSNRESNNNSPSQGSIKEISLDELDNHIEQLDNDIENSDNNKSSSLTRRSSDPNKDIENSLKAQGLFSSYSAPGVPNSDHNYDFETYQQQQQYQQQLHQQQLQLQQQYQSQIQSDISFPHDDVEIESYSIQQQQLQQQQQQQQEQHKEDNNKPNTNLRRNSIAVSTFMEDEPNEMPINNLYKMNEQIQQQPIIGGSGNVMRSQFNQTLPTIDQQPVIEAPKTRRMSLDSRMLNGDQQSLVEKNQHMASPRTSKGIFKSSTTTTKSPEKTIIELKRSLEESGLFTKKKGPYLFLCFDEDNSVKFQIEIVKICNLDLTGIQLKRLSGDTWKYKDICTELVESMKL.

Residues 1–27 (MESNKSSSHGDVSTSPSFLNNHHQFNN) show a composition bias toward polar residues. Residues 1–32 (MESNKSSSHGDVSTSPSFLNNHHQFNNGGDII) form a disordered region. The Protein kinase domain occupies 46-300 (YEVGKTLGNG…IQELKNHPWT (255 aa)). Residues 52 to 60 (LGNGTFGKV) and K75 contribute to the ATP site. D171 functions as the Proton acceptor in the catalytic mechanism. Residues 362-390 (RYASKEVENLKSKLELLSKRKKSFSDKRN) adopt a coiled-coil conformation. Disordered stretches follow at residues 382-445 (KKSF…SQGS), 462-487 (DNDI…NKDI), and 558-588 (YSIQ…TNLR). Positions 405-443 (DLSSNNNNNQQQQNSPPSKTNSSSTSSSNRESNNNSPSQ) are enriched in low complexity. The stretch at 445–474 (SIKEISLDELDNHIEQLDNDIENSDNNKSS) forms a coiled coil. The segment covering 468-478 (SDNNKSSSLTR) has biased composition (polar residues). The span at 561 to 573 (QQQQLQQQQQQQQ) shows a compositional bias: low complexity. In terms of domain architecture, KA1 spans 724–773 (CFDEDNSVKFQIEIVKICNLDLTGIQLKRLSGDTWKYKDICTELVESMKL).

This sequence belongs to the protein kinase superfamily. CAMK Ser/Thr protein kinase family. SNF1 subfamily.

It catalyses the reaction L-seryl-[protein] + ATP = O-phospho-L-seryl-[protein] + ADP + H(+). It carries out the reaction L-threonyl-[protein] + ATP = O-phospho-L-threonyl-[protein] + ADP + H(+). The polypeptide is Probable serine/threonine-protein kinase MARK-C (mrkC) (Dictyostelium discoideum (Social amoeba)).